We begin with the raw amino-acid sequence, 317 residues long: Methyltransferase CPUR_05424 (317 aa).

The segment at 57–149 is methyltransferase domain; that stretch reads DVGAGNGPYA…QLRPGGTFAC (93 aa).

This sequence belongs to the methyltransferase superfamily.

It functions in the pathway pigment biosynthesis. Methyltransferase; part of the ergochrome gene cluster responsible for the typical purple-black color of the ergot sclerotia. The ergochrome gene cluster produces several ergot pigments including the yellow ergochrome secalonic acid and its derivatives, as well as the red anthraquinones endocrocin and clavorubin. The pathway begins with the synthesis of atrochrysone thioester by the polyketide synthase (PKS) CPUR_05437. The atrochrysone carboxyl ACP thioesterase CPUR_05436 then breaks the thioester bond and releases the atrochrysone carboxylic acid from CPUR_05437. The atrochrysone carboxylic acid is then converted to atrochrysone which is further transformed into emodin anthrone. The next step is performed by the anthrone oxygenase CPUR_05434 that catalyzes the oxidation of emodinanthrone to emodin. Emodin is further modified to yield monodictyphenone via several steps involving CPUR_05427, CPUR_05428, CPUR_05429 and CPUR_05430. The short chain dehydrogenase/reductase CPUR_05418 then catalyzes the C-5 ketoreduction to give the xanthone skeleton of the monomeric units. Ergochromes formation requires further dimerization steps of different xanthone units, probably catalyzed by the cytochrome P450 monooxygenase CPUR_05419. CPUR_05425, CPUR_05426 and CPUR_05431 are unique to Claviceps, thus it is likely that they are involved in further modification of xanthone units or in their dimerization. The yellow ergochromes and the red anthraquinone pigments endocrocin and clavorubin are products from the same PKS derived precursors and the latter are likely shunt products in the pathway of xanthone biosynthesis. It is proposed that atrochrysone carboxylic acid released from the PKS CPUR_05437 can also be converted to endocrocin anthrone which is further oxidized into endocrocin by CPUR_05435. Endocrocin could be then modified to clavorubin, possibly by CPUR_05423 and CPUR_05431. Clavorubin is the principal anthraquinone metabolite produced by the cluster with a much higher yield compared to endocrocin. This is Methyltransferase CPUR_05424 from Claviceps purpurea (strain 20.1) (Ergot fungus).